The primary structure comprises 134 residues: D-ribose pyranase (134 aa).

Residue His-20 is the Proton donor of the active site. Residues Asp-28, His-99, and 123–125 (YSN) each bind substrate.

This sequence belongs to the RbsD / FucU family. RbsD subfamily. As to quaternary structure, homodecamer.

It localises to the cytoplasm. The enzyme catalyses beta-D-ribopyranose = beta-D-ribofuranose. The protein operates within carbohydrate metabolism; D-ribose degradation; D-ribose 5-phosphate from beta-D-ribopyranose: step 1/2. Its function is as follows. Catalyzes the interconversion of beta-pyran and beta-furan forms of D-ribose. The protein is D-ribose pyranase of Staphylococcus aureus (strain Mu3 / ATCC 700698).